Consider the following 79-residue polypeptide: D-alanyl carrier protein (79 aa).

The 77-residue stretch at 1-77 folds into the Carrier domain; it reads MDIKAEVIEI…KIVEGVTELR (77 aa). Ser-35 carries the O-(pantetheine 4'-phosphoryl)serine modification.

It belongs to the DltC family. In terms of processing, 4'-phosphopantetheine is transferred from CoA to a specific serine of apo-DCP.

Its subcellular location is the cytoplasm. Its pathway is cell wall biogenesis; lipoteichoic acid biosynthesis. Carrier protein involved in the D-alanylation of lipoteichoic acid (LTA). The loading of thioester-linked D-alanine onto DltC is catalyzed by D-alanine--D-alanyl carrier protein ligase DltA. The DltC-carried D-alanyl group is further transferred to cell membrane phosphatidylglycerol (PG) by forming an ester bond, probably catalyzed by DltD. D-alanylation of LTA plays an important role in modulating the properties of the cell wall in Gram-positive bacteria, influencing the net charge of the cell wall. The chain is D-alanyl carrier protein from Streptococcus sanguinis (strain SK36).